The primary structure comprises 365 residues: Peptide chain release factor 1 (365 aa).

Residue Gln236 is modified to N5-methylglutamine.

The protein belongs to the prokaryotic/mitochondrial release factor family. In terms of processing, methylated by PrmC. Methylation increases the termination efficiency of RF1.

It localises to the cytoplasm. Peptide chain release factor 1 directs the termination of translation in response to the peptide chain termination codons UAG and UAA. This is Peptide chain release factor 1 from Latilactobacillus sakei subsp. sakei (strain 23K) (Lactobacillus sakei subsp. sakei).